Here is a 315-residue protein sequence, read N- to C-terminus: Spermidine synthase 1 (315 aa).

The PABS domain maps to 25–262 (PGWFSEISPL…GMIGFMLCST (238 aa)). Glutamine 56 contacts S-adenosyl 3-(methylsulfanyl)propylamine. Tyrosine 86 lines the putrescine pocket. S-adenosyl 3-(methylsulfanyl)propylamine contacts are provided by residues glutamine 87, aspartate 111, glutamate 131, 162 to 163 (DG), and aspartate 181. Aspartate 181 serves as the catalytic Proton acceptor. Putrescine is bound by residues 181–184 (DSSD) and tyrosine 250.

The protein belongs to the spermidine/spermine synthase family.

The catalysed reaction is S-adenosyl 3-(methylsulfanyl)propylamine + putrescine = S-methyl-5'-thioadenosine + spermidine + H(+). Its pathway is amine and polyamine biosynthesis; spermidine biosynthesis; spermidine from putrescine: step 1/1. The polypeptide is Spermidine synthase 1 (Hyoscyamus niger (Black henbane)).